A 356-amino-acid chain; its full sequence is UDP-N-acetylglucosamine--N-acetylmuramyl-(pentapeptide) pyrophosphoryl-undecaprenol N-acetylglucosamine transferase (356 aa).

UDP-N-acetyl-alpha-D-glucosamine-binding positions include 15–17 (TGG), asparagine 127, arginine 163, serine 191, isoleucine 244, 263–268 (ALTVSE), and glutamine 288.

The protein belongs to the glycosyltransferase 28 family. MurG subfamily.

It is found in the cell inner membrane. The enzyme catalyses di-trans,octa-cis-undecaprenyl diphospho-N-acetyl-alpha-D-muramoyl-L-alanyl-D-glutamyl-meso-2,6-diaminopimeloyl-D-alanyl-D-alanine + UDP-N-acetyl-alpha-D-glucosamine = di-trans,octa-cis-undecaprenyl diphospho-[N-acetyl-alpha-D-glucosaminyl-(1-&gt;4)]-N-acetyl-alpha-D-muramoyl-L-alanyl-D-glutamyl-meso-2,6-diaminopimeloyl-D-alanyl-D-alanine + UDP + H(+). The protein operates within cell wall biogenesis; peptidoglycan biosynthesis. Cell wall formation. Catalyzes the transfer of a GlcNAc subunit on undecaprenyl-pyrophosphoryl-MurNAc-pentapeptide (lipid intermediate I) to form undecaprenyl-pyrophosphoryl-MurNAc-(pentapeptide)GlcNAc (lipid intermediate II). The polypeptide is UDP-N-acetylglucosamine--N-acetylmuramyl-(pentapeptide) pyrophosphoryl-undecaprenol N-acetylglucosamine transferase (Yersinia pseudotuberculosis serotype O:1b (strain IP 31758)).